Reading from the N-terminus, the 93-residue chain is Small ribosomal subunit protein uS19 (93 aa).

The disordered stretch occupies residues Met-1 to Asn-23. Over residues Pro-9–Asn-23 the composition is skewed to basic and acidic residues.

The protein belongs to the universal ribosomal protein uS19 family.

In terms of biological role, protein S19 forms a complex with S13 that binds strongly to the 16S ribosomal RNA. This chain is Small ribosomal subunit protein uS19, found in Nocardioides sp. (strain ATCC BAA-499 / JS614).